The sequence spans 306 residues: MRFRQLLPLFGALFALYIIWGSTYFVIRIGVESWPPLMMAGVRFLAAGILLLAFLLLRGHKLPPLRPLLNAALIGLLLLAVGNGMVTVAEHQNVPSGIAAVVVATVPLFTLCFSRLFGIKTRKLEWVGIAIGLAGIIMLNSGGNLSGNPWGAILILIGSISWAFGSVYGSRITLPVGMMAGAIEMLAAGVVLMIASMIAGEKLTALPSLSGFLAVGYLALFGSIIAINAYMYLIRNVSPALATSYAYVNPVVAVLLGTGLGGETLSKIEWLALGVIVFAVVLVTLGKYLFPAKPVVAPVIQDASSE.

At 1 to 6 (MRFRQL) the chain is on the cytoplasmic side. The chain crosses the membrane as a helical span at residues 7-27 (LPLFGALFALYIIWGSTYFVI). The EamA 1 domain occupies 18–141 (IIWGSTYFVI…GLAGIIMLNS (124 aa)). Residues 28–36 (RIGVESWPP) lie on the Periplasmic side of the membrane. A helical membrane pass occupies residues 37–57 (LMMAGVRFLAAGILLLAFLLL). At 58 to 67 (RGHKLPPLRP) the chain is on the cytoplasmic side. A helical membrane pass occupies residues 68–88 (LLNAALIGLLLLAVGNGMVTV). At 89–93 (AEHQN) the chain is on the periplasmic side. A helical transmembrane segment spans residues 94–114 (VPSGIAAVVVATVPLFTLCFS). The Cytoplasmic segment spans residues 115 to 125 (RLFGIKTRKLE). A helical transmembrane segment spans residues 126-146 (WVGIAIGLAGIIMLNSGGNLS). The Periplasmic segment spans residues 147-148 (GN). A helical transmembrane segment spans residues 149-169 (PWGAILILIGSISWAFGSVYG). The EamA 2 domain occupies 160-285 (ISWAFGSVYG…IVFAVVLVTL (126 aa)). Residues 170–173 (SRIT) lie on the Cytoplasmic side of the membrane. A helical transmembrane segment spans residues 174-194 (LPVGMMAGAIEMLAAGVVLMI). The Periplasmic segment spans residues 195 to 206 (ASMIAGEKLTAL). The helical transmembrane segment at 207–227 (PSLSGFLAVGYLALFGSIIAI) threads the bilayer. The Cytoplasmic portion of the chain corresponds to 228–239 (NAYMYLIRNVSP). A helical transmembrane segment spans residues 240 to 260 (ALATSYAYVNPVVAVLLGTGL). Over 261–269 (GGETLSKIE) the chain is Periplasmic. Residues 270–290 (WLALGVIVFAVVLVTLGKYLF) form a helical membrane-spanning segment. Residues 291 to 306 (PAKPVVAPVIQDASSE) are Cytoplasmic-facing.

The protein belongs to the EamA transporter family.

The protein resides in the cell inner membrane. This is an uncharacterized protein from Escherichia coli O157:H7.